Consider the following 406-residue polypeptide: MSFPIERVRADFPLLSRQVNGQPLVYLDSAASAQKPQAVIDKELHFYRDGYAAVHRGIHSLSAEATQQMEAVRTQVADFIHAASAEEIIFVRGTTEAINLVANSYGRHFLVTGDSIIITEMEHHANIVPWQMLAQDLGVEIRVWPLTATGELEITDLAALIDDTTRLLAVTQISNVLGTVNPIKDIVAQAKAAGLVVLVDGAQAVMHQPVDVQALGCDFYVFSGHKLYGPSGIGILYGKSALLQQMPPWEGGGAMIKTVSLTQGTTFADAPWRFEAGSPNTAGIMGLGAAIDYVTELGLLQIQQYEQSLMHYALAQLSQIKSLTLYGPTERAGVIAFNLGLHHAYDVGSFLDQYGIAIRTGHHCAMPLMAFYQVPSMCRASLALYNTREDVDRLVAGLQRIEKLLG.

Lys226 carries the post-translational modification N6-(pyridoxal phosphate)lysine. The active-site Cysteine persulfide intermediate is the Cys364.

The protein belongs to the class-V pyridoxal-phosphate-dependent aminotransferase family. Csd subfamily. As to quaternary structure, homodimer. Interacts with SufE and the SufBCD complex composed of SufB, SufC and SufD. The interaction with SufE is required to mediate the direct transfer of the sulfur atom from the S-sulfanylcysteine. Requires pyridoxal 5'-phosphate as cofactor.

It is found in the cytoplasm. The catalysed reaction is (sulfur carrier)-H + L-cysteine = (sulfur carrier)-SH + L-alanine. The enzyme catalyses L-selenocysteine + AH2 = hydrogenselenide + L-alanine + A + H(+). It participates in cofactor biosynthesis; iron-sulfur cluster biosynthesis. Cysteine desulfurases mobilize the sulfur from L-cysteine to yield L-alanine, an essential step in sulfur metabolism for biosynthesis of a variety of sulfur-containing biomolecules. Component of the suf operon, which is activated and required under specific conditions such as oxidative stress and iron limitation. Acts as a potent selenocysteine lyase in vitro, that mobilizes selenium from L-selenocysteine. Selenocysteine lyase activity is however unsure in vivo. The sequence is that of Cysteine desulfurase from Yersinia pseudotuberculosis serotype O:1b (strain IP 31758).